Consider the following 248-residue polypeptide: Aliphatic sulfonates import ATP-binding protein SsuB 2 (248 aa).

One can recognise an ABC transporter domain in the interval 14-230; the sequence is VRVESLVRSF…DHGHRRFGEI (217 aa). 46 to 53 contributes to the ATP binding site; that stretch reads GRSGSGKS.

The protein belongs to the ABC transporter superfamily. Aliphatic sulfonates importer (TC 3.A.1.17.2) family. In terms of assembly, the complex is composed of two ATP-binding proteins (SsuB), two transmembrane proteins (SsuC) and a solute-binding protein (SsuA).

The protein resides in the cell inner membrane. It catalyses the reaction ATP + H2O + aliphatic sulfonate-[sulfonate-binding protein]Side 1 = ADP + phosphate + aliphatic sulfonateSide 2 + [sulfonate-binding protein]Side 1.. Its function is as follows. Part of the ABC transporter complex SsuABC involved in aliphatic sulfonates import. Responsible for energy coupling to the transport system. In Mesorhizobium japonicum (strain LMG 29417 / CECT 9101 / MAFF 303099) (Mesorhizobium loti (strain MAFF 303099)), this protein is Aliphatic sulfonates import ATP-binding protein SsuB 2.